The primary structure comprises 276 residues: Large ribosomal subunit protein uL2 (276 aa).

Disordered stretches follow at residues 37–59 and 224–276; these read QFQK…GGHK and VAMN…RHKR. A compositionally biased stretch (basic residues) spans 50-59; the sequence is TTRHKGGGHK.

This sequence belongs to the universal ribosomal protein uL2 family. In terms of assembly, part of the 50S ribosomal subunit. Forms a bridge to the 30S subunit in the 70S ribosome.

One of the primary rRNA binding proteins. Required for association of the 30S and 50S subunits to form the 70S ribosome, for tRNA binding and peptide bond formation. It has been suggested to have peptidyltransferase activity; this is somewhat controversial. Makes several contacts with the 16S rRNA in the 70S ribosome. The sequence is that of Large ribosomal subunit protein uL2 from Ralstonia nicotianae (strain ATCC BAA-1114 / GMI1000) (Ralstonia solanacearum).